The sequence spans 429 residues: Serine--tRNA ligase (429 aa).

236-238 contacts L-serine; it reads TAE. Residue 267–269 coordinates ATP; sequence RSE. E290 is a binding site for L-serine. 354-357 lines the ATP pocket; sequence EVSS. S390 is an L-serine binding site.

The protein belongs to the class-II aminoacyl-tRNA synthetase family. Type-1 seryl-tRNA synthetase subfamily. As to quaternary structure, homodimer. The tRNA molecule binds across the dimer.

It localises to the cytoplasm. It carries out the reaction tRNA(Ser) + L-serine + ATP = L-seryl-tRNA(Ser) + AMP + diphosphate + H(+). It catalyses the reaction tRNA(Sec) + L-serine + ATP = L-seryl-tRNA(Sec) + AMP + diphosphate + H(+). Its pathway is aminoacyl-tRNA biosynthesis; selenocysteinyl-tRNA(Sec) biosynthesis; L-seryl-tRNA(Sec) from L-serine and tRNA(Sec): step 1/1. Catalyzes the attachment of serine to tRNA(Ser). Is also able to aminoacylate tRNA(Sec) with serine, to form the misacylated tRNA L-seryl-tRNA(Sec), which will be further converted into selenocysteinyl-tRNA(Sec). This chain is Serine--tRNA ligase, found in Wigglesworthia glossinidia brevipalpis.